We begin with the raw amino-acid sequence, 546 residues long: Probable ATP-dependent RNA helicase DDX56 (546 aa).

The Q motif signature appears at 7-35; it reads LGFEHMGLDHRLLQAVTDLGWSRPTLIQE. The Helicase ATP-binding domain occupies 38–218; sequence IPLALEGKDL…ELVLHNPVTL (181 aa). ATP is bound at residue 51 to 58; that stretch reads ARTGSGKT. Ser126 is modified (phosphoserine). Residue Thr141 is modified to Phosphothreonine. Residues 166–169 carry the DEAD box motif; that stretch reads DEAD. The region spanning 230–424 is the Helicase C-terminal domain; it reads QLQQFQVVCE…PYQFHMEEIE (195 aa). Disordered stretches follow at residues 323–342 and 504–546; these read PVKG…SDPE and LVHP…AAPS. The segment covering 505–524 has biased composition (basic residues); sequence VHPHKKRKKPLASKKAKKAK. Residue Ser531 is modified to Phosphoserine.

It belongs to the DEAD box helicase family. DDX56/DBP9 subfamily. As to quaternary structure, may form homooligomeric complexes. Interacts with IRF3. Interacts with OCT4 and POU5F1.

The protein localises to the nucleus. The protein resides in the nucleolus. It catalyses the reaction ATP + H2O = ADP + phosphate + H(+). Functionally, nucleolar RNA helicase that plays a role in various biological processes including innate immunity, ribosome biogenesis or nucleolus organization. Plays an essential role in maintaining nucleolar integrity in planarian stem cells. Maintains embryonic stem cells proliferation by conventional regulation of ribosome assembly and interaction with OCT4 and POU5F1 complex. Regulates antiviral innate immunity by inhibiting the virus-triggered signaling nuclear translocation of IRF3. Mechanistically, acts by disrupting the interaction between IRF3 and importin IPO5. May play a role in later stages of the processing of the pre-ribosomal particles leading to mature 60S ribosomal subunits. Has intrinsic ATPase activity. The sequence is that of Probable ATP-dependent RNA helicase DDX56 (DDX56) from Bos taurus (Bovine).